The primary structure comprises 142 residues: Hemoglobin subunit alpha-2 (142 aa).

The 141-residue stretch at 2–142 folds into the Globin domain; that stretch reads VLSAADKSNV…VSTVLTSKYR (141 aa). His-59 provides a ligand contact to O2. Heme b is bound at residue His-88.

It belongs to the globin family. Heterotetramer of two alpha chains and two beta chains.

Involved in oxygen transport from the lung to the various peripheral tissues. Its function is as follows. Hemopressin acts as an antagonist peptide of the cannabinoid receptor CNR1. Hemopressin-binding efficiently blocks cannabinoid receptor CNR1 and subsequent signaling. This chain is Hemoglobin subunit alpha-2 (HBA2), found in Capra hircus (Goat).